The following is a 96-amino-acid chain: DNA/RNA-binding protein Alba (96 aa).

It belongs to the histone-like Alba family.

It is found in the cytoplasm. The protein localises to the chromosome. Binds double-stranded DNA tightly but without sequence specificity. Involved in DNA compaction. This chain is DNA/RNA-binding protein Alba, found in Methanocella arvoryzae (strain DSM 22066 / NBRC 105507 / MRE50).